The following is a 208-amino-acid chain: Uracil phosphoribosyltransferase (208 aa).

5-phospho-alpha-D-ribose 1-diphosphate is bound by residues arginine 78, arginine 103, and aspartate 130 to serine 138. Residues isoleucine 193 and glycine 198–alanine 200 contribute to the uracil site. Aspartate 199 is a 5-phospho-alpha-D-ribose 1-diphosphate binding site.

Belongs to the UPRTase family. Requires Mg(2+) as cofactor.

It carries out the reaction UMP + diphosphate = 5-phospho-alpha-D-ribose 1-diphosphate + uracil. It functions in the pathway pyrimidine metabolism; UMP biosynthesis via salvage pathway; UMP from uracil: step 1/1. With respect to regulation, allosterically activated by GTP. Functionally, catalyzes the conversion of uracil and 5-phospho-alpha-D-ribose 1-diphosphate (PRPP) to UMP and diphosphate. In Neisseria meningitidis serogroup B (strain ATCC BAA-335 / MC58), this protein is Uracil phosphoribosyltransferase.